A 348-amino-acid polypeptide reads, in one-letter code: Aspartate carbamoyltransferase catalytic subunit (348 aa).

Carbamoyl phosphate-binding residues include Arg57 and Thr58. Residue Lys86 coordinates L-aspartate. Carbamoyl phosphate contacts are provided by Arg107, His135, and Gln138. Arg172 and Arg234 together coordinate L-aspartate. Residues Leu274 and Pro275 each contribute to the carbamoyl phosphate site.

It belongs to the aspartate/ornithine carbamoyltransferase superfamily. ATCase family. In terms of assembly, heterododecamer (2C3:3R2) of six catalytic PyrB chains organized as two trimers (C3), and six regulatory PyrI chains organized as three dimers (R2).

The enzyme catalyses carbamoyl phosphate + L-aspartate = N-carbamoyl-L-aspartate + phosphate + H(+). The protein operates within pyrimidine metabolism; UMP biosynthesis via de novo pathway; (S)-dihydroorotate from bicarbonate: step 2/3. Functionally, catalyzes the condensation of carbamoyl phosphate and aspartate to form carbamoyl aspartate and inorganic phosphate, the committed step in the de novo pyrimidine nucleotide biosynthesis pathway. The polypeptide is Aspartate carbamoyltransferase catalytic subunit (Dichelobacter nodosus (strain VCS1703A)).